Reading from the N-terminus, the 458-residue chain is Bifunctional thioredoxin reductase/thioredoxin (458 aa).

The interval 1 to 321 (MNTTPSAHET…LAEHAGSKAN (321 aa)) is thioredoxin reductase. FAD is bound by residues 19–22 (SGPA), 41–48 (EGTSFGGA), N57, and V90. C142 and C145 are disulfide-bonded. The NADP(+) site is built by S163, H182, R188, I245, and Y265. Residues D285 and 292–295 (RQAI) contribute to the FAD site. R292 is an NADP(+) binding site. The segment at 322-347 (ETTEETGDVDSTDTTDWSTAMTDAKN) is linker. The 115-residue stretch at 341–455 (AMTDAKNAGV…LLRDLSDVVP (115 aa)) folds into the Thioredoxin domain. C379 and C382 form a disulfide bridge.

It in the N-terminal section; belongs to the class-II pyridine nucleotide-disulfide oxidoreductase family. Homodimer. FAD serves as cofactor.

It is found in the cytoplasm. It catalyses the reaction [thioredoxin]-dithiol + NADP(+) = [thioredoxin]-disulfide + NADPH + H(+). The chain is Bifunctional thioredoxin reductase/thioredoxin (trxB/A) from Mycobacterium leprae (strain TN).